Here is an 859-residue protein sequence, read N- to C-terminus: Bifunctional levopimaradiene synthase, chloroplastic (859 aa).

The N-terminal 52 residues, 1-52 (MALLSSSLSSHIPTGAHHLTLNAYANTQCIPHFFSTLNAGTSAGKRSSLYLR), are a transit peptide targeting the chloroplast. Positions 392, 394, 611, 615, 755, and 763 each coordinate Mg(2+). A DXDD motif motif is present at residues 392–395 (DIDD). The short motif at 611–615 (DDLYD) is the DDXXD motif element.

Belongs to the terpene synthase family. Tpsd subfamily. Requires Mg(2+) as cofactor. It depends on Mn(2+) as a cofactor.

The protein localises to the plastid. It localises to the chloroplast. It carries out the reaction (+)-copalyl diphosphate = abieta-8(14),12-diene + diphosphate. It catalyses the reaction (+)-copalyl diphosphate = abieta-7,13-diene + diphosphate. It functions in the pathway secondary metabolite biosynthesis; terpenoid biosynthesis. It participates in terpene metabolism; oleoresin biosynthesis. Functionally, terpene synthase (di-TPS) involved in the biosynthesis of diterpene natural products included in conifer oleoresin secretions and volatile emissions; these compounds contribute to biotic and abiotic stress defense against herbivores and pathogens. Catalyzes the conversion of (+)-copalyl diphosphate ((+)-CPP) to isopimaradiene. This Picea sitchensis (Sitka spruce) protein is Bifunctional levopimaradiene synthase, chloroplastic.